Consider the following 473-residue polypeptide: FAD-dependent oxidoreductase dpchF (473 aa).

The N-terminal stretch at 1–21 is a signal peptide; sequence MKLSFIASPVWALALAQFAAA. N-linked (GlcNAc...) asparagine glycosylation is found at Asn98, Asn128, Asn181, Asn262, and Asn330.

It belongs to the beta-cyclopiazonate dehydrogenase family. It depends on FAD as a cofactor.

Its pathway is secondary metabolite biosynthesis; terpenoid biosynthesis. Functionally, FAD-dependent oxidoreductase; part of the gene cluster that mediates the biosynthesis of the diterpenoid pyrones higginsianins A and B. The first step of the pathway is the synthesis of the alpha-pyrone moiety by the polyketide synthase dpchA via condensation of one acetyl-CoA starter unit with 3 malonyl-CoA units and 2 methylations. The alpha-pyrone is then combined with geranylgeranyl pyrophosphate (GGPP) formed by the GGPP synthase dpchD through the action of the prenyltransferase dpchC to yield a linear alpha-pyrone diterpenoid. Subsequent steps in the diterpenoid pyrone biosynthetic pathway involve the decalin core formation, which is initiated by the epoxidation of the C10-C11 olefin by the FAD-dependent oxidoreductase dpchE, and is followed by a cyclization cascade catalyzed by the terpene cyclase dpchB. The short chain dehydrogenase/reductase dpchG then oxidizes the 8S hydroxy group to a ketone and the short chain dehydrogenase/reductase dpchH reduces the ketone to the 8R hydroxy group to yield higginsianin B. Finally, the FAD-dependent oxidoreductase dpchF converts higginsianin B into higginsianin A. The polypeptide is FAD-dependent oxidoreductase dpchF (Colletotrichum higginsianum (strain IMI 349063) (Crucifer anthracnose fungus)).